The sequence spans 156 residues: Phosphopantetheine adenylyltransferase (156 aa).

Residue threonine 9 coordinates substrate. ATP-binding positions include 9–10 and histidine 17; that span reads TF. Substrate-binding residues include lysine 41, leucine 73, and arginine 87. ATP contacts are provided by residues 88-90, glutamate 98, and 123-129; these read GVR and WVFVSST.

It belongs to the bacterial CoaD family. In terms of assembly, homohexamer. The cofactor is Mg(2+).

The protein localises to the cytoplasm. The catalysed reaction is (R)-4'-phosphopantetheine + ATP + H(+) = 3'-dephospho-CoA + diphosphate. Its pathway is cofactor biosynthesis; coenzyme A biosynthesis; CoA from (R)-pantothenate: step 4/5. Functionally, reversibly transfers an adenylyl group from ATP to 4'-phosphopantetheine, yielding dephospho-CoA (dPCoA) and pyrophosphate. This chain is Phosphopantetheine adenylyltransferase, found in Haemophilus influenzae (strain PittEE).